Consider the following 458-residue polypeptide: Alpha-glucosides-binding periplasmic protein AglE (458 aa).

An N-terminal signal peptide occupies residues 1-27 (MKRSLLIGVAAFALLAGTAGLAGTAGA).

This sequence belongs to the bacterial solute-binding protein 1 family.

It is found in the periplasm. In terms of biological role, part of the binding-protein-dependent transport system for alpha-glucosides such as sucrose, maltose and trehalose. This Rhizobium meliloti (strain 1021) (Ensifer meliloti) protein is Alpha-glucosides-binding periplasmic protein AglE (aglE).